A 231-amino-acid chain; its full sequence is Orotidine 5'-phosphate decarboxylase (231 aa).

Residues Asp11, Lys33, 60–69 (DLKFHDIPNT), Thr120, Arg181, Gln190, Gly210, and Arg211 each bind substrate. Catalysis depends on Lys62, which acts as the Proton donor.

Belongs to the OMP decarboxylase family. Type 1 subfamily. As to quaternary structure, homodimer.

It carries out the reaction orotidine 5'-phosphate + H(+) = UMP + CO2. It participates in pyrimidine metabolism; UMP biosynthesis via de novo pathway; UMP from orotate: step 2/2. Catalyzes the decarboxylation of orotidine 5'-monophosphate (OMP) to uridine 5'-monophosphate (UMP). This chain is Orotidine 5'-phosphate decarboxylase, found in Photobacterium profundum (strain SS9).